We begin with the raw amino-acid sequence, 318 residues long: Taste receptor type 2 member 7 (318 aa).

Topologically, residues 1 to 9 (MTDKVQTTL) are extracellular. Residues 10–30 (LFLAVGEFSVGILGNAFIGLV) traverse the membrane as a helical segment. The Cytoplasmic portion of the chain corresponds to 31 to 55 (NCMDWIKKRKIASIDLILTSLAISR). The helical transmembrane segment at 56–76 (ICLLCVILLDCFILVLYPDVY) threads the bilayer. Topologically, residues 77–94 (ATGKEMRIIDFFWILTNH) are extracellular. Residues 95–115 (LSIWFATCLSIYYFFKIANFF) traverse the membrane as a helical segment. At 116 to 128 (HPLFLWMKWRIDR) the chain is on the cytoplasmic side. A helical transmembrane segment spans residues 129–149 (VISWILLGCMVLSVFISLPAT). The Extracellular portion of the chain corresponds to 150 to 187 (ENLNADFRFCVKAKRKTNLTWSCRVNKTQHASIKLLLN). 2 N-linked (GlcNAc...) asparagine glycosylation sites follow: Asn167 and Asn175. A helical membrane pass occupies residues 188 to 208 (LATLLPFCVCLMSFFLLILSL). The Cytoplasmic portion of the chain corresponds to 209–235 (RRHIRRMQLSATGCRDPSTEAHVRALK). Residues 236 to 256 (AVISFLLLFIAYYLSFLIATS) form a helical membrane-spanning segment. At 257–266 (SYFMPETELA) the chain is on the extracellular side. The helical transmembrane segment at 267–287 (VIFGESIALIYPSSHSFILIL) threads the bilayer. Over 288 to 318 (GNNKLRHASLKVIWKVMSILKGRKFQQHKQI) the chain is Cytoplasmic.

The protein belongs to the G-protein coupled receptor T2R family.

It is found in the membrane. In terms of biological role, gustducin-coupled receptor implicated in the perception of bitter compounds in the oral cavity and the gastrointestinal tract. Signals through PLCB2 and the calcium-regulated cation channel TRPM5. The polypeptide is Taste receptor type 2 member 7 (TAS2R7) (Pongo pygmaeus (Bornean orangutan)).